The chain runs to 664 residues: Macrolide export ATP-binding/permease protein MacB (664 aa).

Residues Leu8–Asp245 form the ABC transporter domain. Gly44 to Ser51 is a binding site for ATP. 4 helical membrane-spanning segments follow: residues Leu283–Gly303, Gly543–Val563, Ile602–Ala622, and Ile627–Trp647.

Belongs to the ABC transporter superfamily. Macrolide exporter (TC 3.A.1.122) family. Homodimer.

Its subcellular location is the cell inner membrane. Non-canonical ABC transporter that contains transmembrane domains (TMD), which form a pore in the inner membrane, and an ATP-binding domain (NBD), which is responsible for energy generation. Confers resistance against macrolides. This Chlorobium luteolum (strain DSM 273 / BCRC 81028 / 2530) (Pelodictyon luteolum) protein is Macrolide export ATP-binding/permease protein MacB.